The following is a 951-amino-acid chain: Replication protein A 70 kDa DNA-binding subunit C (951 aa).

The disordered stretch occupies residues 139-172 (AQTNNGTYSGGASMLGPSVAPRAEQAASNSSYGG). Residues 320–403 (WTIKARVTAK…NTLNHDYEIT (84 aa)) constitute a DNA-binding region (OB). A C4-type zinc finger spans residues 612–639 (CPKLLPVGRQCNKKAINNGDGMWHCDRC).

The protein belongs to the replication factor A protein 1 family. As to quaternary structure, heterotrimer of RPA1, RPA2 and RPA3 (canonical replication protein A complex). Interacts with RPA2C.

It is found in the nucleus. In terms of biological role, component of the replication protein A complex (RPA) required for DNA recombination, repair and replication. The activity of RPA is mediated by single-stranded DNA binding and protein interactions. Probably involved in repair of double-strand DNA breaks (DSBs) induced by genotoxic stresses. This Oryza sativa subsp. japonica (Rice) protein is Replication protein A 70 kDa DNA-binding subunit C (RPA1C).